A 380-amino-acid polypeptide reads, in one-letter code: Putative T-box protein 40 (380 aa).

Positions 11–192 (MAEEDRWLTQ…KNATFENRLD (182 aa)) form a DNA-binding region, T-box. A disordered region spans residues 188-215 (ENRLDGGNKRKNTNSREEPSSKRSKNET). Over residues 189-215 (NRLDGGNKRKNTNSREEPSSKRSKNET) the composition is skewed to basic and acidic residues.

It localises to the nucleus. The sequence is that of Putative T-box protein 40 (tbx-40) from Caenorhabditis elegans.